The sequence spans 302 residues: Oxygen-dependent coproporphyrinogen-III oxidase (302 aa).

Ser94 contacts substrate. A divalent metal cation contacts are provided by His98 and His108. Residue His108 is the Proton donor of the active site. 110–112 is a substrate binding site; the sequence is NVR. His147 and His177 together coordinate a divalent metal cation. The important for dimerization stretch occupies residues 242 to 277; it reads YVEFNLVYDRGTLFGLQTGGRTESILMSMPPLVRWQ. 260–262 lines the substrate pocket; it reads GGR.

It belongs to the aerobic coproporphyrinogen-III oxidase family. Homodimer. The cofactor is a divalent metal cation.

Its subcellular location is the cytoplasm. The enzyme catalyses coproporphyrinogen III + O2 + 2 H(+) = protoporphyrinogen IX + 2 CO2 + 2 H2O. It functions in the pathway porphyrin-containing compound metabolism; protoporphyrin-IX biosynthesis; protoporphyrinogen-IX from coproporphyrinogen-III (O2 route): step 1/1. Involved in the heme biosynthesis. Catalyzes the aerobic oxidative decarboxylation of propionate groups of rings A and B of coproporphyrinogen-III to yield the vinyl groups in protoporphyrinogen-IX. This chain is Oxygen-dependent coproporphyrinogen-III oxidase, found in Shewanella sp. (strain ANA-3).